A 536-amino-acid chain; its full sequence is Alpha-1,3-mannosyl-glycoprotein 4-beta-N-acetylglucosaminyltransferase A (536 aa).

The Cytoplasmic segment spans residues 1–6 (MRLRNG). A helical; Signal-anchor for type II membrane protein membrane pass occupies residues 7–27 (TVATALVFITTFLSLSWYTAW). Positions 28–54 (QNGKEKLMAYQREFHALKERLRIAEHR) form a coiled coil. The Lumenal segment spans residues 28–536 (QNGKEKLMAY…EIHIKRNPAD (509 aa)). Residues Asn-77 and Asn-458 are each glycosylated (N-linked (GlcNAc...) asparagine).

This sequence belongs to the glycosyltransferase 54 family. It depends on a divalent metal cation as a cofactor. N-glycosylated.

The protein resides in the golgi apparatus membrane. The protein localises to the secreted. The enzyme catalyses N(4)-{beta-D-GlcNAc-(1-&gt;2)-alpha-D-Man-(1-&gt;3)-[beta-D-GlcNAc-(1-&gt;2)-alpha-D-Man-(1-&gt;6)]-beta-D-Man-(1-&gt;4)-beta-D-GlcNAc-(1-&gt;4)-beta-D-GlcNAc}-L-asparaginyl-[protein] + UDP-N-acetyl-alpha-D-glucosamine = N(4)-{beta-D-GlcNAc-(1-&gt;2)-[beta-D-GlcNAc-(1-&gt;4)]-alpha-D-Man-(1-&gt;3)-[beta-D-GlcNAc-(1-&gt;2)-alpha-D-Man-(1-&gt;6)]-beta-D-Man-(1-&gt;4)-beta-D-GlcNAc-(1-&gt;4)-beta-D-GlcNAc}-L-asparaginyl-[protein] + UDP + H(+). It carries out the reaction an N(4)-{beta-D-GlcNAc-(1-&gt;2)-alpha-D-Man-(1-&gt;3)-[alpha-D-Man-(1-&gt;6)]-beta-D-Man-(1-&gt;4)-beta-D-GlcNAc-(1-&gt;4)-beta-D-GlcNAc}-L-asparaginyl-[protein] + UDP-N-acetyl-alpha-D-glucosamine = an N(4)-{beta-D-GlcNAc-(1-&gt;2)-[beta-D-GlcNAc-(1-&gt;4)]-alpha-D-Man-(1-&gt;3)-[alpha-D-Man-(1-&gt;6)]-beta-D-Man-(1-&gt;4)-beta-D-GlcNAc-(1-&gt;4)-beta-D-GlcNAc}-L-asparaginyl-[protein] + UDP + H(+). It catalyses the reaction an N(4)-{beta-D-GlcNAc-(1-&gt;2)-alpha-D-Man-(1-&gt;3)-[beta-D-GlcNAc-(1-&gt;2)-[beta-D-GlcNAc-(1-&gt;6)]-alpha-D-Man-(1-&gt;6)]-beta-D-Man-(1-&gt;4)-beta-D-GlcNAc-(1-&gt;4)-beta-D-GlcNAc}-L-asparaginyl-[protein] + UDP-N-acetyl-alpha-D-glucosamine = an N(4)-{beta-D-GlcNAc-(1-&gt;2)-[beta-D-GlcNAc-(1-&gt;4)]-alpha-D-Man-(1-&gt;3)-[beta-D-GlcNAc-(1-&gt;2)-[beta-D-GlcNAc-(1-&gt;6)]-alpha-D-Man-(1-&gt;6)]-beta-D-Man-(1-&gt;4)-beta-D-GlcNAc-(1-&gt;4)-beta-D-GlcNAc}-L-asparaginyl-[protein] + UDP + H(+). The catalysed reaction is an N(4)-{beta-D-GlcNAc-(1-&gt;2)-alpha-D-Man-(1-&gt;3)-[beta-D-GlcNAc-(1-&gt;2)-alpha-D-Man-(1-&gt;6)]-beta-D-Man-(1-&gt;4)-beta-D-GlcNAc-(1-&gt;4)-[alpha-L-Fuc-(1-&gt;6)]-beta-D-GlcNAc}-L-asparaginyl-[protein] + UDP-N-acetyl-alpha-D-glucosamine = N(4)-{beta-D-GlcNAc-(1-&gt;2)-[beta-D-GlcNAc-(1-&gt;4)]-alpha-D-Man-(1-&gt;3)-[beta-D-GlcNAc-(1-&gt;2)-alpha-D-Man-(1-&gt;6)]-beta-D-Man-(1-&gt;4)-beta-D-GlcNAc-(1-&gt;4)-[alpha-L-Fuc-(1-&gt;6)]-beta-D-GlcNAc}-asparaginyl-[protein] + UDP + H(+). The enzyme catalyses an N(4)-{beta-D-GlcNAc-(1-&gt;2)-alpha-D-Man-(1-&gt;3)-[beta-D-Gal-(1-&gt;4)-beta-D-GlcNAc-(1-&gt;2)-alpha-D-Man-(1-&gt;6)]-beta-D-Man-(1-&gt;4)-beta-D-GlcNAc-(1-&gt;4)-beta-D-GlcNAc}-L-asparaginyl-[protein] + UDP-N-acetyl-alpha-D-glucosamine = an N(4)-{beta-D-GlcNAc-(1-&gt;2)-[beta-D-GlcNAc-(1-&gt;4)]-alpha-D-Man-(1-&gt;3)-[beta-D-Gal-(1-&gt;4)-beta-D-GlcNAc-(1-&gt;2)-alpha-D-Man-(1-&gt;6)]-beta-D-Man-(1-&gt;4)-beta-D-GlcNAc-(1-&gt;4)-beta-D-GlcNAc}-L-asparaginyl-[protein] + UDP + H(+). It carries out the reaction N(4)-{beta-D-GlcNAc-(1-&gt;2)-alpha-D-Man-(1-&gt;3)-[alpha-D-Man-(1-&gt;3)-{alpha-D-Man-(1-&gt;6)}-alpha-D-Man-(1-&gt;6)]-beta-D-Man-(1-&gt;4)-beta-D-GlcNAc-(1-&gt;4)-beta-D-GlcNAc}-asparaginyl-[protein] + UDP-N-acetyl-alpha-D-glucosamine = N(4)-{beta-D-GlcNAc-(1-&gt;2)-[beta-D-GlcNAc-(1-&gt;4)]-alpha-D-Man-(1-&gt;3)-[alpha-D-Man-(1-&gt;3)-{alpha-D-Man-(1-&gt;6)}-alpha-D-Man-(1-&gt;6)]-beta-D-Man-(1-&gt;4)-beta-D-GlcNAc-(1-&gt;4)-beta-D-GlcNAc}-asparaginyl-[protein] + UDP + H(+). It catalyses the reaction N(4)-{beta-D-GlcNAc-(1-&gt;2)-alpha-D-Man-(1-&gt;3)-beta-D-Man-(1-&gt;4)-beta-D-GlcNAc-(1-&gt;4)-beta-D-GlcNAc}-asparaginyl-[protein] + UDP-N-acetyl-alpha-D-glucosamine = N(4)-{beta-D-GlcNAc-(1-&gt;2)-[beta-D-GlcNAc-(1-&gt;4)]-alpha-D-Man-(1-&gt;3)-beta-D-Man-(1-&gt;4)-beta-D-GlcNAc-(1-&gt;4)-beta-D-GlcNAc}-asparaginyl-[protein] + UDP + H(+). It participates in protein modification; protein glycosylation. Inhibited by UDP. In terms of biological role, glycosyltransferase that catalyze the transfer of GlcNAc from UDP-GlcNAc to the GlcNAcbeta1-2Manalpha1-3 arm of the core structure of N-linked glycans through a beta1-4 linkage and participates in the production of tri- and tetra-antennary N-linked sugar chains. Involved in glucose transport by mediating SLC2A2/GLUT2 glycosylation, thereby controlling cell-surface expression of SLC2A2 in pancreatic beta cells. The protein is Alpha-1,3-mannosyl-glycoprotein 4-beta-N-acetylglucosaminyltransferase A of Xenopus tropicalis (Western clawed frog).